We begin with the raw amino-acid sequence, 239 residues long: MLIIAGLGNPGPKYAGNRHNIGFMAVDAIQRRQGFSAWSRKFKSEVSEGEIDGERVLLMKPQTFMNLSGEALGDAMRFYKLAPKDIVVIYDELDLPAGKARIKTGGGHGGHNGIKSIDAHCGKEYRRLRLGIGHPGVKDLVHAHVLGDFAKADQAWLSLLLEAIADNAAMLVKGEDSQLMNKIALATGGKPETEKPVAVKKQAAQSHIHQARATAQPKKLPVTGPMADMLKKMFGPKGD.

Tyr-14 lines the tRNA pocket. His-19 acts as the Proton acceptor in catalysis. 3 residues coordinate tRNA: Phe-64, Asn-66, and Asn-112.

This sequence belongs to the PTH family. Monomer.

It is found in the cytoplasm. The enzyme catalyses an N-acyl-L-alpha-aminoacyl-tRNA + H2O = an N-acyl-L-amino acid + a tRNA + H(+). Functionally, hydrolyzes ribosome-free peptidyl-tRNAs (with 1 or more amino acids incorporated), which drop off the ribosome during protein synthesis, or as a result of ribosome stalling. In terms of biological role, catalyzes the release of premature peptidyl moieties from peptidyl-tRNA molecules trapped in stalled 50S ribosomal subunits, and thus maintains levels of free tRNAs and 50S ribosomes. The polypeptide is Peptidyl-tRNA hydrolase (Rhizobium meliloti (strain 1021) (Ensifer meliloti)).